Consider the following 264-residue polypeptide: Thymidylate synthase (264 aa).

Arg-21 contacts dUMP. His-51 is a binding site for (6R)-5,10-methylene-5,6,7,8-tetrahydrofolate. 126-127 (RR) lines the dUMP pocket. Cys-146 (nucleophile) is an active-site residue. DUMP-binding positions include 166–169 (RSAD), Asn-177, and 207–209 (HLY). (6R)-5,10-methylene-5,6,7,8-tetrahydrofolate is bound at residue Asp-169. (6R)-5,10-methylene-5,6,7,8-tetrahydrofolate is bound at residue Ala-263.

The protein belongs to the thymidylate synthase family. Bacterial-type ThyA subfamily. Homodimer.

The protein localises to the cytoplasm. The enzyme catalyses dUMP + (6R)-5,10-methylene-5,6,7,8-tetrahydrofolate = 7,8-dihydrofolate + dTMP. It functions in the pathway pyrimidine metabolism; dTTP biosynthesis. Its function is as follows. Catalyzes the reductive methylation of 2'-deoxyuridine-5'-monophosphate (dUMP) to 2'-deoxythymidine-5'-monophosphate (dTMP) while utilizing 5,10-methylenetetrahydrofolate (mTHF) as the methyl donor and reductant in the reaction, yielding dihydrofolate (DHF) as a by-product. This enzymatic reaction provides an intracellular de novo source of dTMP, an essential precursor for DNA biosynthesis. The chain is Thymidylate synthase from Polynucleobacter asymbioticus (strain DSM 18221 / CIP 109841 / QLW-P1DMWA-1) (Polynucleobacter necessarius subsp. asymbioticus).